A 213-amino-acid chain; its full sequence is Motile sperm domain-containing protein 1 (213 aa).

The MSP domain occupies 16–143 (PVFVFPTELI…KEHLTESVFF (128 aa)). 2 consecutive transmembrane segments (helical) span residues 159–179 (SLLT…PTLG) and 191–211 (LSVN…MAIL). Residues 205-208 (LITM) carry the Nuclear export signal motif.

Widely expressed. Shows highest expression in ribs, and slightly lower levels of expression in heart, kidney, muscle, thymus, calvariae and lung. Also detected at low levels in spleen and liver.

Its subcellular location is the endoplasmic reticulum membrane. The protein localises to the golgi apparatus membrane. Plays a role in differentiation and/or proliferation of mesenchymal stem cells. Proposed to be involved in epithelial-to-mesenchymal transition (EMT). However, another study suggests that it is not required for EMT or stem cell self-renewal and acts during later stages of differentiation. The chain is Motile sperm domain-containing protein 1 (Mospd1) from Mus musculus (Mouse).